Consider the following 154-residue polypeptide: MGLSDQEWQHVLTIWGKVESDLAGHGHQVLMRLFQDHPETLDRFEKFKGLKTPDQMKGSEDLKKHGVTVLTQLGKILKQKGNHESELKPLAQTHATKHKIPVKYLEFISEAIIKVIAEKHASSFGADSQAAMKKALELFRNDMASKYKEFGFQG.

In terms of domain architecture, Globin spans G2–K148. H65 is a nitrite binding site. H65 is an O2 binding site. H94 contributes to the heme b binding site.

It belongs to the globin family. In terms of assembly, monomeric.

The protein localises to the cytoplasm. The protein resides in the sarcoplasm. It catalyses the reaction Fe(III)-heme b-[protein] + nitric oxide + H2O = Fe(II)-heme b-[protein] + nitrite + 2 H(+). It carries out the reaction H2O2 + AH2 = A + 2 H2O. Monomeric heme protein which primary function is to store oxygen and facilitate its diffusion within muscle tissues. Reversibly binds oxygen through a pentacoordinated heme iron and enables its timely and efficient release as needed during periods of heightened demand. Depending on the oxidative conditions of tissues and cells, and in addition to its ability to bind oxygen, it also has a nitrite reductase activity whereby it regulates the production of bioactive nitric oxide. Under stress conditions, like hypoxia and anoxia, it also protects cells against reactive oxygen species thanks to its pseudoperoxidase activity. This Uria lomvia (Thick-billed murre) protein is Myoglobin (MB).